The chain runs to 176 residues: Large ribosomal subunit protein uL6 (176 aa).

Residues 156–170 (YKGKGVRYADEQVRR) are compositionally biased toward basic and acidic residues. The disordered stretch occupies residues 156 to 176 (YKGKGVRYADEQVRRKEAKKK).

This sequence belongs to the universal ribosomal protein uL6 family. As to quaternary structure, part of the 50S ribosomal subunit.

Functionally, this protein binds to the 23S rRNA, and is important in its secondary structure. It is located near the subunit interface in the base of the L7/L12 stalk, and near the tRNA binding site of the peptidyltransferase center. In Shewanella woodyi (strain ATCC 51908 / MS32), this protein is Large ribosomal subunit protein uL6.